The sequence spans 145 residues: Synaptojanin-2-binding protein (145 aa).

Over 1-117 (MNGRVDYLVT…GHRGEGDPSG (117 aa)) the chain is Cytoplasmic. In terms of domain architecture, PDZ spans 13–100 (EINLTRGPSG…AVSLRVQHRL (88 aa)). The helical transmembrane segment at 118–138 (IPIFMVLVPVFALTMVAAWAF) threads the bilayer. Topologically, residues 139–145 (MRYRQQL) are mitochondrial intermembrane.

As to quaternary structure, binds (via the PDZ domain) to isoform 2A of SYNJ2 (via the unique motif in the C-terminus). Interacts (via C-terminus) with RALBP1. Interacts (via PDZ domain) with ACVR2A (via C-terminus) and ACVR2B (via C-terminus). Forms a ternary complex with ACVR2A and RALBP1. Interacts with MAPK12. Interacts with DLL1; enhances DLL1 protein stability, and promotes notch signaling in endothelial cells.

Its subcellular location is the mitochondrion outer membrane. Functionally, regulates endocytosis of activin type 2 receptor kinases through the Ral/RALBP1-dependent pathway and may be involved in suppression of activin-induced signal transduction. The polypeptide is Synaptojanin-2-binding protein (SYNJ2BP) (Homo sapiens (Human)).